A 394-amino-acid polypeptide reads, in one-letter code: MNKKTLKDIDVKGKRVFCRVDFNVPMKDGKVTDETRIRAAIPTIQYLVEQGAKVILASHLGRPKGEVVEELRLNAVAERLQALLGKDVAKADEAFGEEVKKTIDGMSEGDVLVLENVRFYPGEEKNDPELAKAFAELADVYVNDAFGAAHRAHASTEGIAQHIPAVAGFLMEKELDVLSKALSNPERPFTAIVGGAKVKDKIGVIDHLLDKVDNLIIGGGLSYTFIKALGHEVGKSLLEEDKIELAKSFMEKAKKNGVNFYMPVDVVVADDFSNDANIQVVSIEDIPSDWEGLDAGPKTREIYADVIKNSKLVIWNGPMGVFELDAFANGTKAVAEALAEATDTYSVIGGGDSAAAVEKFNLADKMSHISTGGGASLEFMEGKELPGVVALNDK.

Residues 21-23 (DFN), Arg-36, 59-62 (HLGR), Arg-118, and Arg-151 each bind substrate. Ser-183 carries the post-translational modification Phosphoserine. The ATP site is built by Lys-201 and Gly-292. Thr-299 carries the post-translational modification Phosphothreonine. ATP contacts are provided by residues Glu-323 and 350–353 (GGDS).

Belongs to the phosphoglycerate kinase family. Monomer.

The protein localises to the cytoplasm. It catalyses the reaction (2R)-3-phosphoglycerate + ATP = (2R)-3-phospho-glyceroyl phosphate + ADP. It participates in carbohydrate degradation; glycolysis; pyruvate from D-glyceraldehyde 3-phosphate: step 2/5. This is Phosphoglycerate kinase (pgk) from Priestia megaterium (strain DSM 319 / IMG 1521) (Bacillus megaterium).